The chain runs to 56 residues: Large ribosomal subunit protein bL33 (56 aa).

Belongs to the bacterial ribosomal protein bL33 family.

This chain is Large ribosomal subunit protein bL33, found in Ehrlichia canis (strain Jake).